A 156-amino-acid polypeptide reads, in one-letter code: Protein archease-like (156 aa).

3 residues coordinate Ca(2+): Asp-25, Asp-155, and Ile-156.

It belongs to the archease family.

In terms of biological role, component of the tRNA-splicing ligase complex required to facilitate the enzymatic turnover of catalytic subunit RtcB. Plays an important role in a RNA repair and splicing pathway which controls axon regeneration in response to peripheral (PNS) and central nervous system (CNS) injury, by activating splicing of Xbp1 to promote axon regeneration in response to axotomy. This Drosophila melanogaster (Fruit fly) protein is Protein archease-like.